Reading from the N-terminus, the 120-residue chain is MSRAKVTNARRKQRVRLSLRRSAGGRPRLSVFRSSKHIYAQVIDDQKGETLASASSMEKEMRSSGNTGADIDAAKAVGKLLAERAVKAGIKEVVFDRGGYLYHGRVKALADAARESGLSF.

The protein belongs to the universal ribosomal protein uL18 family. In terms of assembly, part of the 50S ribosomal subunit; part of the 5S rRNA/L5/L18/L25 subcomplex. Contacts the 5S and 23S rRNAs.

This is one of the proteins that bind and probably mediate the attachment of the 5S RNA into the large ribosomal subunit, where it forms part of the central protuberance. In Bradyrhizobium sp. (strain BTAi1 / ATCC BAA-1182), this protein is Large ribosomal subunit protein uL18.